Here is a 115-residue protein sequence, read N- to C-terminus: Nucleoid-associated protein Ava_2322 (115 aa).

It belongs to the YbaB/EbfC family. Homodimer.

The protein resides in the cytoplasm. The protein localises to the nucleoid. Functionally, binds to DNA and alters its conformation. May be involved in regulation of gene expression, nucleoid organization and DNA protection. This Trichormus variabilis (strain ATCC 29413 / PCC 7937) (Anabaena variabilis) protein is Nucleoid-associated protein Ava_2322.